Reading from the N-terminus, the 250-residue chain is tRNA (guanine-N(1)-)-methyltransferase (250 aa).

S-adenosyl-L-methionine contacts are provided by residues G113 and 133–138 (IGDYVL).

The protein belongs to the RNA methyltransferase TrmD family. In terms of assembly, homodimer.

It is found in the cytoplasm. The enzyme catalyses guanosine(37) in tRNA + S-adenosyl-L-methionine = N(1)-methylguanosine(37) in tRNA + S-adenosyl-L-homocysteine + H(+). Specifically methylates guanosine-37 in various tRNAs. This chain is tRNA (guanine-N(1)-)-methyltransferase, found in Shewanella amazonensis (strain ATCC BAA-1098 / SB2B).